The sequence spans 84 residues: Cell division topological specificity factor (84 aa).

Belongs to the MinE family.

In terms of biological role, prevents the cell division inhibition by proteins MinC and MinD at internal division sites while permitting inhibition at polar sites. This ensures cell division at the proper site by restricting the formation of a division septum at the midpoint of the long axis of the cell. The chain is Cell division topological specificity factor from Pseudomonas syringae pv. syringae (strain B728a).